A 599-amino-acid polypeptide reads, in one-letter code: MKLAPEFYEVLRNRINISDVVRQKVVLTRKSGNYVGLCPFHQEKTPSFTVSDSKRFFYCFGCKAAGDVIKFTSNISGLSYNDSAIKLATDYGVEIPKLTQKQKEFYEESDEILNILELANKFFKSQLTPEILNYLNERNITNETIKEFSIGFAPRGNKFEKFFHDKNITNVQLGKAGLIGKREDGEIYSLFSNRITIPIRNIYNKIVGFGGRVIGQGLPKYLNSPETVVFQKSETLYGEHKAISSSYKKNYSILVEGYFDVISLHQAGFSEVVASLGTSVTENHLHKLWRAGDEIILCLDGDSAGIKASVRTINLALPLINSEKKISFIRLPTGLDPDDAVNKNGVDFFTKLIDTRISLSEMIWQIEYAGKNFKTAEDKANLEKNLKDYCSKISDSNLRASYYRFFKDQIWQNLVTKQQKTVAKNVNLLPLSSGYSELEILEHAFCALLIKFPQILQEFEIKEFILNLNFSNKLLEEFRNWYLSEVIDNAVEAGEIAAIVEKTSFFDIFLLLSEADNLFLDIAFNKDNVRLDLLWQWLYKRYYLLNLQQEYAHITKEYVITNIDDYEKVLFYKKEILKIASELQDLNESFINHIIDNSK.

A CHC2-type zinc finger spans residues 38-62 (CPFHQEKTPSFTVSDSKRFFYCFGC). The Toprim domain occupies 250–332 (NYSILVEGYF…EKKISFIRLP (83 aa)). Residues Glu256, Asp300, and Asp302 each coordinate Mg(2+).

It belongs to the DnaG primase family. In terms of assembly, monomer. Interacts with DnaB. Zn(2+) serves as cofactor. The cofactor is Mg(2+).

It carries out the reaction ssDNA + n NTP = ssDNA/pppN(pN)n-1 hybrid + (n-1) diphosphate.. Functionally, RNA polymerase that catalyzes the synthesis of short RNA molecules used as primers for DNA polymerase during DNA replication. This is DNA primase from Rickettsia bellii (strain RML369-C).